The sequence spans 424 residues: Hemagglutinin-esterase (424 aa).

Residues 1–16 (MFLLPRFCLVCSIIGT) form the signal peptide. Residues 7–127 (FCLVCSIIGT…NNDIWMQNKG (121 aa)) are esterase domain 1. The Virion surface segment spans residues 17-392 (FGFENPPTNV…PICVYDPLPI (376 aa)). The active-site Nucleophile is serine 40. An intrachain disulfide couples cysteine 44 to cysteine 65. 5 N-linked (GlcNAc...) asparagine; by host glycosylation sites follow: asparagine 54, asparagine 89, asparagine 153, asparagine 236, and asparagine 301. Cystine bridges form between cysteine 113/cysteine 162, cysteine 197/cysteine 276, and cysteine 205/cysteine 249. A receptor binding region spans residues 128–266 (LFYTQVYKKM…GNYLAISNEL (139 aa)). Residues 267–379 (LLTVPTKAIC…NCPTAASIIS (113 aa)) are esterase domain 2. A disulfide bridge links cysteine 307 with cysteine 312. N-linked (GlcNAc...) asparagine; by host glycosylation is present at asparagine 316. Active-site charge relay system residues include aspartate 326 and histidine 329. The cysteines at positions 347 and 371 are disulfide-linked. Residue asparagine 358 is glycosylated (N-linked (GlcNAc...) asparagine; by host). A helical membrane pass occupies residues 393–413 (ILLGILLGVAVIVIVVLLLYF). Topologically, residues 414–424 (MVDNGIRQHYA) are intravirion.

Belongs to the influenza type C/coronaviruses hemagglutinin-esterase family. In terms of assembly, homodimer; disulfide-linked. Forms a complex with the M protein in the pre-Golgi. Associates then with S-M complex to form a ternary complex S-M-HE. In terms of processing, N-glycosylated in the host RER.

Its subcellular location is the virion membrane. The protein localises to the host cell membrane. The catalysed reaction is N-acetyl-9-O-acetylneuraminate + H2O = N-acetylneuraminate + acetate + H(+). It carries out the reaction N-acetyl-4-O-acetylneuraminate + H2O = N-acetylneuraminate + acetate + H(+). Structural protein that makes short spikes at the surface of the virus. Contains receptor binding and receptor-destroying activities. Mediates de-O-acetylation of N-acetyl-4-O-acetylneuraminic acid, which is probably the receptor determinant recognized by the virus on the surface of erythrocytes and susceptible cells. This receptor-destroying activity is important for virus release as it probably helps preventing self-aggregation and ensures the efficient spread of the progeny virus from cell to cell. May serve as a secondary viral attachment protein for initiating infection, the spike protein being the major one. May become a target for both the humoral and the cellular branches of the immune system. This is Hemagglutinin-esterase from Sus scrofa (Pig).